A 338-amino-acid chain; its full sequence is Protein REG2 (338 aa).

The disordered stretch occupies residues methionine 1–glutamate 21.

Regulatory subunit, binds to type-1 protein phosphatase. Functions with HEX2/REG1 and SNF1 protein kinase to regulate growth. Might regulate SNF1 directly or indirectly. The protein is Protein REG2 (REG2) of Saccharomyces cerevisiae (strain ATCC 204508 / S288c) (Baker's yeast).